A 297-amino-acid polypeptide reads, in one-letter code: Large ribosomal subunit protein uL18 (297 aa).

Gly2 is subject to N-acetylglycine. N6-acetyllysine occurs at positions 5 and 48. The residue at position 185 (Ser185) is a Phosphoserine. Lys220 is subject to N6-acetyllysine; alternate. Lys220 participates in a covalent cross-link: Glycyl lysine isopeptide (Lys-Gly) (interchain with G-Cter in SUMO1); alternate. A Glycyl lysine isopeptide (Lys-Gly) (interchain with G-Cter in SUMO2); alternate cross-link involves residue Lys220. Thr232 carries the phosphothreonine modification. Residues 253-297 (YEKKPKREVKKKRWNRPKMSLAQKKDRVAQKKASFLRAQERAAES) are disordered. Basic residues predominate over residues 258–268 (KREVKKKRWNR). Ser272 carries the phosphoserine modification.

This sequence belongs to the universal ribosomal protein uL18 family. In terms of assembly, component of the large ribosomal subunit (LSU). Part of the 5S RNP complex, which is a LSU subcomplex composed of the 5S RNA, RPL5 and RPL11. Component of a hexameric 5S RNP precursor complex, composed of 5S RNA, RRS1, RPF2/BXDC1, RPL5, RPL11 and HEATR3; this complex acts as a precursor for ribosome assembly. Interacts with NVL in an ATP-dependent manner. Interacts with RRP1B. Interacts with IPO5, IPO7 and KPNB1; these interactions may be involved in RPL5 nuclear import for the assembly of ribosomal subunits. Interacts with RRP1B.

It localises to the cytoplasm. It is found in the nucleus. The protein resides in the nucleolus. Its function is as follows. Component of the ribosome, a large ribonucleoprotein complex responsible for the synthesis of proteins in the cell. The small ribosomal subunit (SSU) binds messenger RNAs (mRNAs) and translates the encoded message by selecting cognate aminoacyl-transfer RNA (tRNA) molecules. The large subunit (LSU) contains the ribosomal catalytic site termed the peptidyl transferase center (PTC), which catalyzes the formation of peptide bonds, thereby polymerizing the amino acids delivered by tRNAs into a polypeptide chain. The nascent polypeptides leave the ribosome through a tunnel in the LSU and interact with protein factors that function in enzymatic processing, targeting, and the membrane insertion of nascent chains at the exit of the ribosomal tunnel. As part of the 5S RNP/5S ribonucleoprotein particle it is an essential component of the LSU, required for its formation and the maturation of rRNAs. It also couples ribosome biogenesis to p53/TP53 activation. As part of the 5S RNP it accumulates in the nucleoplasm and inhibits MDM2, when ribosome biogenesis is perturbed, mediating the stabilization and the activation of TP53. This is Large ribosomal subunit protein uL18 (Rpl5) from Rattus norvegicus (Rat).